We begin with the raw amino-acid sequence, 430 residues long: Adenylosuccinate synthetase (430 aa).

Residues 12–18 and 40–42 each bind GTP; these read GDEGKGK and GHT. The Proton acceptor role is filled by Asp-13. Asp-13 and Gly-40 together coordinate Mg(2+). Residues 13–16, 38–41, Thr-128, Arg-142, Gln-223, Thr-238, and Arg-302 each bind IMP; these read DEGK and NAGH. His-41 acts as the Proton donor in catalysis. 298 to 304 serves as a coordination point for substrate; that stretch reads TTTGRPR. Residues Arg-304, 330 to 332, and 412 to 414 each bind GTP; these read SID and SVG.

It belongs to the adenylosuccinate synthetase family. In terms of assembly, homodimer. It depends on Mg(2+) as a cofactor.

Its subcellular location is the cytoplasm. The catalysed reaction is IMP + L-aspartate + GTP = N(6)-(1,2-dicarboxyethyl)-AMP + GDP + phosphate + 2 H(+). The protein operates within purine metabolism; AMP biosynthesis via de novo pathway; AMP from IMP: step 1/2. Plays an important role in the de novo pathway of purine nucleotide biosynthesis. Catalyzes the first committed step in the biosynthesis of AMP from IMP. The chain is Adenylosuccinate synthetase from Streptococcus suis (strain 98HAH33).